The primary structure comprises 288 residues: Small ribosomal subunit protein uS2 (288 aa).

Low complexity predominate over residues 259 to 276 (EAAPAAEEAPAAEAEAAA). The segment at 259-288 (EAAPAAEEAPAAEAEAAATDTSSESDKTEA) is disordered.

Belongs to the universal ribosomal protein uS2 family.

In Maricaulis maris (strain MCS10) (Caulobacter maris), this protein is Small ribosomal subunit protein uS2.